The primary structure comprises 127 residues: Small ribosomal subunit protein uS12m (127 aa).

Belongs to the universal ribosomal protein uS12 family.

It localises to the mitochondrion. Protein S12 is involved in the translation initiation step. The chain is Small ribosomal subunit protein uS12m (RPS12) from Chondrus crispus (Carrageen Irish moss).